The sequence spans 226 residues: ATP-dependent dethiobiotin synthetase BioD (226 aa).

13-18 is a binding site for ATP; it reads DVGKTV. Thr-17 lines the Mg(2+) pocket. The active site involves Lys-38. ATP contacts are provided by residues Asp-55, 116-119, and 176-177; these read EGAG and NR. Residues Asp-55 and Glu-116 each coordinate Mg(2+).

This sequence belongs to the dethiobiotin synthetase family. In terms of assembly, homodimer. Mg(2+) is required as a cofactor.

Its subcellular location is the cytoplasm. It carries out the reaction (7R,8S)-7,8-diammoniononanoate + CO2 + ATP = (4R,5S)-dethiobiotin + ADP + phosphate + 3 H(+). It participates in cofactor biosynthesis; biotin biosynthesis; biotin from 7,8-diaminononanoate: step 1/2. Functionally, catalyzes a mechanistically unusual reaction, the ATP-dependent insertion of CO2 between the N7 and N8 nitrogen atoms of 7,8-diaminopelargonic acid (DAPA, also called 7,8-diammoniononanoate) to form a ureido ring. The sequence is that of ATP-dependent dethiobiotin synthetase BioD from Aliivibrio fischeri (strain MJ11) (Vibrio fischeri).